A 1208-amino-acid chain; its full sequence is Chromosome partition protein Smc (1208 aa).

32–39 (PNGCGKSN) contacts ATP. 3 coiled-coil regions span residues 170–205 (VTKY…GERI), 239–504 (EARA…ARVQ), and 694–1054 (VIER…QLQD).

Belongs to the SMC family. As to quaternary structure, homodimer.

The protein localises to the cytoplasm. Its function is as follows. Required for chromosome condensation and partitioning. The chain is Chromosome partition protein Smc from Thauera aminoaromatica.